We begin with the raw amino-acid sequence, 365 residues long: Aminomethyltransferase (365 aa).

Belongs to the GcvT family. In terms of assembly, the glycine cleavage system is composed of four proteins: P, T, L and H.

It catalyses the reaction N(6)-[(R)-S(8)-aminomethyldihydrolipoyl]-L-lysyl-[protein] + (6S)-5,6,7,8-tetrahydrofolate = N(6)-[(R)-dihydrolipoyl]-L-lysyl-[protein] + (6R)-5,10-methylene-5,6,7,8-tetrahydrofolate + NH4(+). Functionally, the glycine cleavage system catalyzes the degradation of glycine. The polypeptide is Aminomethyltransferase (Natranaerobius thermophilus (strain ATCC BAA-1301 / DSM 18059 / JW/NM-WN-LF)).